A 987-amino-acid polypeptide reads, in one-letter code: Valine--tRNA ligase (987 aa).

The 'HIGH' region signature appears at 45-55 (PNVTGSLHMGH). The short motif at 634 to 638 (KMSKS) is the 'KMSKS' region element. Residue K637 coordinates ATP. Residues 917–985 (VIDIGAEKAR…LSAALARLSE (69 aa)) adopt a coiled-coil conformation.

The protein belongs to the class-I aminoacyl-tRNA synthetase family. ValS type 1 subfamily. As to quaternary structure, monomer.

The protein localises to the cytoplasm. It catalyses the reaction tRNA(Val) + L-valine + ATP = L-valyl-tRNA(Val) + AMP + diphosphate. Catalyzes the attachment of valine to tRNA(Val). As ValRS can inadvertently accommodate and process structurally similar amino acids such as threonine, to avoid such errors, it has a 'posttransfer' editing activity that hydrolyzes mischarged Thr-tRNA(Val) in a tRNA-dependent manner. The protein is Valine--tRNA ligase of Cereibacter sphaeroides (strain ATCC 17029 / ATH 2.4.9) (Rhodobacter sphaeroides).